Consider the following 359-residue polypeptide: Fructose-bisphosphate aldolase (359 aa).

Ser-61 is a D-glyceraldehyde 3-phosphate binding site. Catalysis depends on Asp-109, which acts as the Proton donor. Residues His-110, Asp-144, Glu-174, and His-226 each contribute to the Zn(2+) site. Gly-227 contributes to the dihydroxyacetone phosphate binding site. A Zn(2+)-binding site is contributed by His-265. Dihydroxyacetone phosphate is bound by residues 266–268 and 287–290; these read GGS and NIDT.

Belongs to the class II fructose-bisphosphate aldolase family. It depends on Zn(2+) as a cofactor.

It carries out the reaction beta-D-fructose 1,6-bisphosphate = D-glyceraldehyde 3-phosphate + dihydroxyacetone phosphate. The protein operates within carbohydrate degradation; glycolysis; D-glyceraldehyde 3-phosphate and glycerone phosphate from D-glucose: step 4/4. Functionally, catalyzes the aldol condensation of dihydroxyacetone phosphate (DHAP or glycerone-phosphate) with glyceraldehyde 3-phosphate (G3P) to form fructose 1,6-bisphosphate (FBP) in gluconeogenesis and the reverse reaction in glycolysis. This chain is Fructose-bisphosphate aldolase (fba), found in Borreliella burgdorferi (strain ATCC 35210 / DSM 4680 / CIP 102532 / B31) (Borrelia burgdorferi).